The sequence spans 567 residues: Proline--tRNA ligase (567 aa).

It belongs to the class-II aminoacyl-tRNA synthetase family. ProS type 1 subfamily. Homodimer.

The protein localises to the cytoplasm. The catalysed reaction is tRNA(Pro) + L-proline + ATP = L-prolyl-tRNA(Pro) + AMP + diphosphate. Catalyzes the attachment of proline to tRNA(Pro) in a two-step reaction: proline is first activated by ATP to form Pro-AMP and then transferred to the acceptor end of tRNA(Pro). As ProRS can inadvertently accommodate and process non-cognate amino acids such as alanine and cysteine, to avoid such errors it has two additional distinct editing activities against alanine. One activity is designated as 'pretransfer' editing and involves the tRNA(Pro)-independent hydrolysis of activated Ala-AMP. The other activity is designated 'posttransfer' editing and involves deacylation of mischarged Ala-tRNA(Pro). The misacylated Cys-tRNA(Pro) is not edited by ProRS. The chain is Proline--tRNA ligase from Fusobacterium nucleatum subsp. nucleatum (strain ATCC 25586 / DSM 15643 / BCRC 10681 / CIP 101130 / JCM 8532 / KCTC 2640 / LMG 13131 / VPI 4355).